A 295-amino-acid chain; its full sequence is Carbapenem-hydrolyzing beta-lactamase transcriptional activator (295 aa).

The region spanning 5-62 is the HTH lysR-type domain; the sequence is LPLNALRAFEASARYLNFTKAGLELHVSQAAVSQQVRTLEQMLGVALFTRVPRGLQLT. The segment at residues 22 to 41 is a DNA-binding region (H-T-H motif); the sequence is FTKAGLELHVSQAAVSQQVR.

This sequence belongs to the LysR transcriptional regulatory family.

In terms of biological role, this protein is a positive regulator of gene expression of carbapenem-hydrolyzing beta-lactamase (NmcA). In Enterobacter cloacae, this protein is Carbapenem-hydrolyzing beta-lactamase transcriptional activator (nmcR).